Here is a 120-residue protein sequence, read N- to C-terminus: Large ribosomal subunit protein bL17 (120 aa).

This sequence belongs to the bacterial ribosomal protein bL17 family. As to quaternary structure, part of the 50S ribosomal subunit. Contacts protein L32.

This Mycoplasmopsis pulmonis (strain UAB CTIP) (Mycoplasma pulmonis) protein is Large ribosomal subunit protein bL17.